The sequence spans 453 residues: Armadillo repeat-containing X-linked protein 1 (453 aa).

Residues 1–6 lie on the Mitochondrial intermembrane side of the membrane; it reads MGRTRE. Mitochondrion outer membrane (MOM)-targeting sequence regions lie at residues 1 to 6 and 26 to 36; these read MGRTRE and RLAWGRDENEK. The helical; Signal-anchor transmembrane segment at 7–29 threads the bilayer; that stretch reads AGCVAAGVVIGAGACYCVYRLAW. The Cytoplasmic portion of the chain corresponds to 30-453; the sequence is GRDENEKIWD…VKVLKVLTKL (424 aa). Residues 140–182 form a disordered region; the sequence is PSLPCPGGRGGGCHPTRSGSRAGGRASGKSKGKARSKSTRAPA. The segment covering 167–177 has biased composition (basic residues); the sequence is GKSKGKARSKS. ARM repeat units follow at residues 195-235, 237-276, 358-398, and 415-453; these read PYKI…NNAA, SFNQNAIRELGGVPIIAKLIKTKDPIIREKTYNALNNLSV, PAMT…NIND, and SSLFFLFKESGVCVKKIKALANHNDLVVKVKVLKVLTKL.

The protein belongs to the eutherian X-chromosome-specific Armcx family. Interacts with MIRO1.

The protein resides in the mitochondrion. It is found in the mitochondrion outer membrane. Regulates mitochondrial transport during axon regeneration. Increases the proportion of motile mitochondria by recruiting stationary mitochondria into the motile pool. Enhances mitochondria movement and neurite growth in both adult axons and embryonic neurons. Promotes neuronal survival and axon regeneration after nerve injury. May link mitochondria to the Trak1-kinesin motor complex via its interaction with MIRO1. The protein is Armadillo repeat-containing X-linked protein 1 (ARMCX1) of Pongo abelii (Sumatran orangutan).